Reading from the N-terminus, the 884-residue chain is Probable leucine-rich repeat receptor-like protein kinase At2g28990 (884 aa).

Positions 1 to 19 (MKIHLLLAMIGTFVVIIGA) are cleaved as a signal peptide. Over 20–508 (QDQEGFISLD…TEKKNKFLLP (489 aa)) the chain is Extracellular. 13 N-linked (GlcNAc...) asparagine glycosylation sites follow: N70, N177, N217, N231, N251, N284, N298, N334, N418, N427, N438, N459, and N464. LRR repeat units follow at residues 404 to 427 (SPTIISLDLSKSGLNGSIPQILQN), 428 to 451 (FTQLQELDLSNNSLTGPVPIFLAN), and 452 to 476 (MKTLSLINLSGNNLSGSVPQALLDK). Residues 509 to 529 (VIASAASLVIVVVVVALFFVF) traverse the membrane as a helical segment. Residues 530-884 (RKKKASPSNL…IYNEVIPQAR (355 aa)) are Cytoplasmic-facing. The segment at 535–559 (SPSNLHAPPSMPVSNPGHNSQSESS) is disordered. Positions 546 to 559 (PVSNPGHNSQSESS) are enriched in polar residues. T568 is subject to Phosphothreonine. The 274-residue stretch at 577-850 (NNFDKALGEG…RVVNELKECL (274 aa)) folds into the Protein kinase domain. ATP is bound by residues 583 to 591 (LGEGGFGVV) and K605. Position 650 is a phosphotyrosine (Y650). Residue D702 is the Proton acceptor of the active site. S736 is modified (phosphoserine). Phosphothreonine is present on residues T737 and T742. A Phosphotyrosine modification is found at Y750.

It belongs to the protein kinase superfamily. Ser/Thr protein kinase family. In terms of assembly, binds to the ammonium transporter AMT1-1.

It localises to the membrane. The enzyme catalyses L-seryl-[protein] + ATP = O-phospho-L-seryl-[protein] + ADP + H(+). It carries out the reaction L-threonyl-[protein] + ATP = O-phospho-L-threonyl-[protein] + ADP + H(+). The polypeptide is Probable leucine-rich repeat receptor-like protein kinase At2g28990 (Arabidopsis thaliana (Mouse-ear cress)).